We begin with the raw amino-acid sequence, 419 residues long: Tyrosine--tRNA ligase (419 aa).

Y34 serves as a coordination point for L-tyrosine. Residues 39 to 48 carry the 'HIGH' region motif; sequence PSGDSMHIGH. L-tyrosine-binding residues include Y168 and Q172. The 'KMSKS' region motif lies at 230–234; that stretch reads KFGKS. K233 provides a ligand contact to ATP. The 67-residue stretch at 352-418 folds into the S4 RNA-binding domain; the sequence is ANLVDWLVTL…GKKKYFLVSY (67 aa).

The protein belongs to the class-I aminoacyl-tRNA synthetase family. TyrS type 1 subfamily. As to quaternary structure, homodimer.

The protein localises to the cytoplasm. It carries out the reaction tRNA(Tyr) + L-tyrosine + ATP = L-tyrosyl-tRNA(Tyr) + AMP + diphosphate + H(+). Its function is as follows. Catalyzes the attachment of tyrosine to tRNA(Tyr) in a two-step reaction: tyrosine is first activated by ATP to form Tyr-AMP and then transferred to the acceptor end of tRNA(Tyr). This chain is Tyrosine--tRNA ligase, found in Listeria monocytogenes serotype 4a (strain HCC23).